Reading from the N-terminus, the 260-residue chain is Circadian clock-controlled protein daywake (260 aa).

The first 25 residues, 1-25 (MQLTSASVCLLWMGLLSWVSHRIDA), serve as a signal peptide directing secretion.

It belongs to the TO family.

Component of the circadian clock or downstream effector of clock function. Required for suppressing daytime sleep (siesta) under ambient environmental temperatures. Part of a heat avoidance mechanism that modulates daytime sleep behavior under different environmental temperatures to minimize the risk of heat exposure. Under cooler ambient temperatures, suppresses daytime sleep (siesta) and thus allows for longer periods of daytime activity. In Drosophila yakuba (Fruit fly), this protein is Circadian clock-controlled protein daywake.